We begin with the raw amino-acid sequence, 183 residues long: Isopentenyl-diphosphate Delta-isomerase (183 aa).

Residues H26 and H33 each coordinate Mn(2+). Residues 31–165 form the Nudix hydrolase domain; it reads SLHLAFSSWL…PWAFSPWMVS (135 aa). Residue C68 is part of the active site. H70 contributes to the Mn(2+) binding site. Residue E88 coordinates Mg(2+). 2 residues coordinate Mn(2+): E115 and E117. E117 is a catalytic residue.

Belongs to the IPP isomerase type 1 family. In terms of assembly, homodimer. The cofactor is Mg(2+). Mn(2+) serves as cofactor.

Its subcellular location is the cytoplasm. It carries out the reaction isopentenyl diphosphate = dimethylallyl diphosphate. The protein operates within isoprenoid biosynthesis; dimethylallyl diphosphate biosynthesis; dimethylallyl diphosphate from isopentenyl diphosphate: step 1/1. Functionally, catalyzes the 1,3-allylic rearrangement of the homoallylic substrate isopentenyl (IPP) to its highly electrophilic allylic isomer, dimethylallyl diphosphate (DMAPP). This is Isopentenyl-diphosphate Delta-isomerase from Enterobacter sp. (strain 638).